Consider the following 158-residue polypeptide: 6,7-dimethyl-8-ribityllumazine synthase (158 aa).

5-amino-6-(D-ribitylamino)uracil is bound by residues phenylalanine 22, 57 to 59 (AYE), and 84 to 86 (TVI). 89–90 (GT) provides a ligand contact to (2S)-2-hydroxy-3-oxobutyl phosphate. Catalysis depends on histidine 92, which acts as the Proton donor. Phenylalanine 117 lines the 5-amino-6-(D-ribitylamino)uracil pocket. Arginine 131 contacts (2S)-2-hydroxy-3-oxobutyl phosphate.

The protein belongs to the DMRL synthase family. Forms an icosahedral capsid composed of 60 subunits, arranged as a dodecamer of pentamers.

The enzyme catalyses (2S)-2-hydroxy-3-oxobutyl phosphate + 5-amino-6-(D-ribitylamino)uracil = 6,7-dimethyl-8-(1-D-ribityl)lumazine + phosphate + 2 H2O + H(+). It functions in the pathway cofactor biosynthesis; riboflavin biosynthesis; riboflavin from 2-hydroxy-3-oxobutyl phosphate and 5-amino-6-(D-ribitylamino)uracil: step 1/2. In terms of biological role, catalyzes the formation of 6,7-dimethyl-8-ribityllumazine by condensation of 5-amino-6-(D-ribitylamino)uracil with 3,4-dihydroxy-2-butanone 4-phosphate. This is the penultimate step in the biosynthesis of riboflavin. The sequence is that of 6,7-dimethyl-8-ribityllumazine synthase from Pectobacterium atrosepticum (strain SCRI 1043 / ATCC BAA-672) (Erwinia carotovora subsp. atroseptica).